The chain runs to 182 residues: Isopentenyl-diphosphate Delta-isomerase (182 aa).

Mn(2+) contacts are provided by histidine 25 and histidine 32. In terms of domain architecture, Nudix hydrolase spans 30–164 (LLHLAFSSWL…PWAFSPWMVM (135 aa)). Cysteine 67 is an active-site residue. Residue histidine 69 coordinates Mn(2+). Glutamate 87 contacts Mg(2+). Mn(2+)-binding residues include glutamate 114 and glutamate 116. The active site involves glutamate 116.

Belongs to the IPP isomerase type 1 family. As to quaternary structure, homodimer. Mg(2+) is required as a cofactor. Requires Mn(2+) as cofactor.

It localises to the cytoplasm. It carries out the reaction isopentenyl diphosphate = dimethylallyl diphosphate. Its pathway is isoprenoid biosynthesis; dimethylallyl diphosphate biosynthesis; dimethylallyl diphosphate from isopentenyl diphosphate: step 1/1. Its function is as follows. Catalyzes the 1,3-allylic rearrangement of the homoallylic substrate isopentenyl (IPP) to its highly electrophilic allylic isomer, dimethylallyl diphosphate (DMAPP). The protein is Isopentenyl-diphosphate Delta-isomerase of Escherichia coli O17:K52:H18 (strain UMN026 / ExPEC).